Consider the following 297-residue polypeptide: Glycine--tRNA ligase alpha subunit (297 aa).

Belongs to the class-II aminoacyl-tRNA synthetase family. As to quaternary structure, tetramer of two alpha and two beta subunits.

The protein localises to the cytoplasm. It catalyses the reaction tRNA(Gly) + glycine + ATP = glycyl-tRNA(Gly) + AMP + diphosphate. The sequence is that of Glycine--tRNA ligase alpha subunit (glyQ) from Halalkalibacterium halodurans (strain ATCC BAA-125 / DSM 18197 / FERM 7344 / JCM 9153 / C-125) (Bacillus halodurans).